The primary structure comprises 636 residues: Epithelial sodium channel subunit alpha (636 aa).

Residues M1 to A28 are disordered. Residues M1–T77 lie on the Cytoplasmic side of the membrane. A helical membrane pass occupies residues A78–I98. Topologically, residues Y99 to S549 are extracellular. 10 disulfides stabilise this stretch: C126/C293, C218/C225, C270/C277, C381/C466, C403/C443, C403/C462, C407/C458, C416/C443, C416/C466, and C418/C432. Residues V550–L570 form a helical membrane-spanning segment. The Cytoplasmic portion of the chain corresponds to A571–E636.

It belongs to the amiloride-sensitive sodium channel (TC 1.A.6) family. SCNN1A subfamily. As to quaternary structure, heterotrimer; containing an alpha/SCNN1A, a beta/SCNN1B and a gamma/SCNN1G subunit.

The protein localises to the apical cell membrane. It is found in the cell projection. It localises to the cilium. The protein resides in the cytoplasmic granule. Its subcellular location is the cytoplasm. The protein localises to the cytoplasmic vesicle. It is found in the secretory vesicle. It localises to the acrosome. The protein resides in the flagellum. The enzyme catalyses Na(+)(in) = Na(+)(out). Its activity is regulated as follows. Originally identified and characterized by its inhibition by the diuretic drug amiloride. Its function is as follows. This is one of the three pore-forming subunits of the heterotrimeric epithelial sodium channel (ENaC), a critical regulator of sodium balance and fluid homeostasis. ENaC operates in epithelial tissues, where it mediates the electrodiffusion of sodium ions from extracellular fluid through the apical membrane of cells, with water following osmotically. This chain is Epithelial sodium channel subunit alpha, found in Anolis carolinensis (Green anole).